Reading from the N-terminus, the 109-residue chain is Nucleoid-associated protein LGAS_0369 (109 aa).

The protein belongs to the YbaB/EbfC family. As to quaternary structure, homodimer.

It is found in the cytoplasm. The protein localises to the nucleoid. Its function is as follows. Binds to DNA and alters its conformation. May be involved in regulation of gene expression, nucleoid organization and DNA protection. This Lactobacillus gasseri (strain ATCC 33323 / DSM 20243 / BCRC 14619 / CIP 102991 / JCM 1131 / KCTC 3163 / NCIMB 11718 / NCTC 13722 / AM63) protein is Nucleoid-associated protein LGAS_0369.